The following is a 518-amino-acid chain: Filamentous growth regulator 15 (518 aa).

Positions 1-41 are enriched in polar residues; that stretch reads MESTLSVSDEKLTNSSTALNNCGDNKESSQVLTTANTTTDN. 3 disordered regions span residues 1–63, 75–101, and 261–307; these read MEST…SKER, VDPN…DHGK, and KSRS…KQHR. The span at 42–52 shows a compositional bias: low complexity; the sequence is QQVQPKSQHQQ. Positions 77–95 are enriched in polar residues; that stretch reads PNQQSKNTVSDSVQDTTGV. Basic residues predominate over residues 262-274; sequence SRSRSKVTKKRKV. Residues 283–298 show a composition bias toward low complexity; that stretch reads SNTATATTSVTTPDAN. A C2H2-type zinc finger spans residues 374–406; sequence HECQLPSAEEPHKLCLRRFSRKYELIRHQETVH. The segment at 492–518 is disordered; the sequence is RKSSGDDTNYMETSDLESGEEEVTFNK. Positions 505–518 are enriched in acidic residues; the sequence is SDLESGEEEVTFNK.

It localises to the nucleus. In terms of biological role, probable transcription factor involved in the regulation of filamentous growth. The protein is Filamentous growth regulator 15 (FGR15) of Candida albicans (strain SC5314 / ATCC MYA-2876) (Yeast).